The sequence spans 107 residues: L-rhamnose mutarotase (107 aa).

A substrate-binding site is contributed by tyrosine 18. Histidine 22 acts as the Proton donor in catalysis. Residues tyrosine 41 and 76-77 contribute to the substrate site; that span reads WW.

The protein belongs to the rhamnose mutarotase family. Homodimer.

Its subcellular location is the cytoplasm. It carries out the reaction alpha-L-rhamnose = beta-L-rhamnose. The protein operates within carbohydrate metabolism; L-rhamnose metabolism. Functionally, involved in the anomeric conversion of L-rhamnose. This chain is L-rhamnose mutarotase, found in Paraburkholderia xenovorans (strain LB400).